The following is a 196-amino-acid chain: Peroxiredoxin TSA1 (196 aa).

The Thioredoxin domain maps to A3 to W161. K14 participates in a covalent cross-link: Glycyl lysine isopeptide (Lys-Gly) (interchain with G-Cter in ubiquitin). Position 45-47 (T45–V47) interacts with substrate. C48 acts as the Cysteine sulfenic acid (-SOH) intermediate in catalysis. K89 is covalently cross-linked (Glycyl lysine isopeptide (Lys-Gly) (interchain with G-Cter in ubiquitin)). Residue R124 coordinates substrate. K132 participates in a covalent cross-link: Glycyl lysine isopeptide (Lys-Gly) (interchain with G-Cter in ubiquitin). T174 is modified (phosphothreonine).

Belongs to the peroxiredoxin family. AhpC/Prx1 subfamily. Homodimer; disulfide-linked, upon oxidation. Interacts with YAP1 via transient disulfide linkages. Post-translationally, the enzyme can be inactivated by further oxidation of the cysteine sulfenic acid (C(P)-SOH) to sulphinic acid (C(P)-SO2H) instead of its condensation to a disulfide bond. It can be reactivated by forming a transient disulfide bond with sulfiredoxin SRX1, which reduces the cysteine sulfinic acid in an ATP- and Mg-dependent manner.

It is found in the cytoplasm. It catalyses the reaction a hydroperoxide + [thioredoxin]-dithiol = an alcohol + [thioredoxin]-disulfide + H2O. In terms of biological role, thiol-specific peroxidase that catalyzes the reduction of hydrogen peroxide and organic hydroperoxides to water and alcohols, respectively. Plays a role in cell protection against oxidative stress by detoxifying peroxides and as sensor of hydrogen peroxide-mediated signaling events. Protects the cell against the oxidative stress caused by nascent-protein misfolding and aggregation. Relays hydrogen peroxide as a signal to the transcription factor YAP1 by inducing the formation of intramolecular disulfide bonds in YAP1, which causes its nuclear accumulation and activation. Can act alternatively as peroxidase and molecular chaperone. Oxidative stress and heat shock exposure cause a reversible shift of the protein structure from low MW species to high MW complexes, triggering a peroxidase-to-chaperone functional switch. The chaperone function of the protein enhances resistance to heat shock. The protein is Peroxiredoxin TSA1 of Saccharomyces cerevisiae (strain ATCC 204508 / S288c) (Baker's yeast).